The primary structure comprises 115 residues: NADH-ubiquinone oxidoreductase chain 3 (115 aa).

The next 3 membrane-spanning stretches (helical) occupy residues 3–23 (LMATLLTNTMLTSLMVLIAFW), 55–75 (FFLVAITFLLFDLEIALLLPL), and 86–106 (LTLLMSFMLIILLAIGLAYEW).

The protein belongs to the complex I subunit 3 family. Core subunit of respiratory chain NADH dehydrogenase (Complex I) which is composed of 45 different subunits. Interacts with TMEM186. Interacts with TMEM242.

Its subcellular location is the mitochondrion inner membrane. The enzyme catalyses a ubiquinone + NADH + 5 H(+)(in) = a ubiquinol + NAD(+) + 4 H(+)(out). Its function is as follows. Core subunit of the mitochondrial membrane respiratory chain NADH dehydrogenase (Complex I) which catalyzes electron transfer from NADH through the respiratory chain, using ubiquinone as an electron acceptor. Essential for the catalytic activity of complex I. In Mammuthus primigenius (Siberian woolly mammoth), this protein is NADH-ubiquinone oxidoreductase chain 3.